We begin with the raw amino-acid sequence, 198 residues long: Superoxide dismutase [Mn], mitochondrial (198 aa).

Position 26 (His-26) interacts with Mn(2+). Tyr-34 carries the post-translational modification 3'-nitrotyrosine. N6-acetyllysine; alternate occurs at positions 44 and 51. Lys-44 and Lys-51 each carry N6-succinyllysine; alternate. Position 74 (His-74) interacts with Mn(2+). The residue at position 90 (Lys-90) is an N6-acetyllysine. An N6-acetyllysine; alternate mark is found at Lys-98 and Lys-106. An N6-succinyllysine; alternate mark is found at Lys-98 and Lys-106. Mn(2+) is bound by residues Asp-159 and His-163. At Lys-178 the chain carries N6-acetyllysine.

It belongs to the iron/manganese superoxide dismutase family. As to quaternary structure, homotetramer. The cofactor is Mn(2+). Post-translationally, nitrated under oxidative stress. Nitration coupled with oxidation inhibits the catalytic activity. In terms of processing, acetylation at Lys-98 decreases enzymatic activity. Deacetylated by SIRT3 upon exposure to ionizing radiations or after long fasting. Polyubiquitinated; leading to proteasomal degradation. Deubiquitinated by USP36 which increases protein stability.

The protein resides in the mitochondrion matrix. It carries out the reaction 2 superoxide + 2 H(+) = H2O2 + O2. Destroys superoxide anion radicals which are normally produced within the cells and which are toxic to biological systems. The protein is Superoxide dismutase [Mn], mitochondrial (SOD2) of Macaca fuscata fuscata (Japanese macaque).